A 265-amino-acid chain; its full sequence is Leucine-rich repeat-containing protein Bf66946 (265 aa).

Positions 1–20 are cleaved as a signal peptide; that stretch reads MALRDIFLLSMAMTAVTVQA. 2 disulfide bridges follow: Cys21–Cys27 and Cys25–Cys39. Residues 21-50 form the LRRNT domain; the sequence is CPSACKCTVSLYGEMVVACGGMGLTEIPED. 3 LRR repeats span residues 51–75, 76–99, and 100–123; these read IPHR…SFKG, LRNL…ALRH, and LGHL…LFDF. Residue Asn64 is glycosylated (N-linked (GlcNAc...) asparagine). The region spanning 142–193 is the LRRCT domain; the sequence is NPWGCDCRMAWLAQELAGGSKTFGDRHMECATPAALAGRGLSEIPQTSFVCT. 2 disulfide bridges follow: Cys146-Cys171 and Cys148-Cys192. Residues 220 to 240 form a helical membrane-spanning segment; the sequence is VAVVFGCITGLVTILLLVLTA.

The protein resides in the cell membrane. Functionally, binds selectively to the Gram-positive bacteria S.aureus and S.pneumoniae. Does not adhere to the Gram-negative bacteria E.coli and S.enterica. Probably recognizes peptidoglycans expressed on the bacterial cell surface. This chain is Leucine-rich repeat-containing protein Bf66946, found in Branchiostoma floridae (Florida lancelet).